Here is a 134-residue protein sequence, read N- to C-terminus: Protein Turandot E (134 aa).

An N-terminal signal peptide occupies residues 1-38; the sequence is MSYTRTVHSSTSILKMNSALQISCLLVVLGCLLGSGHC.

This sequence belongs to the Turandot family.

It localises to the secreted. A humoral factor that may play a role in stress tolerance. This chain is Protein Turandot E, found in Drosophila simulans (Fruit fly).